Here is a 143-residue protein sequence, read N- to C-terminus: Large ribosomal subunit protein uL13 (143 aa).

It belongs to the universal ribosomal protein uL13 family. Part of the 50S ribosomal subunit.

Functionally, this protein is one of the early assembly proteins of the 50S ribosomal subunit, although it is not seen to bind rRNA by itself. It is important during the early stages of 50S assembly. This is Large ribosomal subunit protein uL13 from Dehalococcoides mccartyi (strain ATCC BAA-2266 / KCTC 15142 / 195) (Dehalococcoides ethenogenes (strain 195)).